The primary structure comprises 336 residues: Telomere-binding protein cav (336 aa).

A required for binding to Su(var)205 region spans residues Arg-107–Glu-328. 2 disordered regions span residues Arg-137–Arg-158 and Ser-199–Gln-218. 2 consecutive short sequence motifs (su(var)205-binding Pro-containing repeat) follow at residues Pro-225–Glu-231 and Pro-289–Glu-295. Positions Met-308–Ser-327 are enriched in polar residues. A disordered region spans residues Met-308 to Ala-336.

In terms of assembly, interacts (via C-terminus) with Su(var)205 dimer (via hinge and chromoshadow domain) and with moi to form the terminin, telomere-capping, complex. Interacts with HP6, which is also part of the terminin complex.

It localises to the nucleus. The protein resides in the chromosome. The protein localises to the telomere. In terms of biological role, binds to chromosome ends in a sequence-dependent manner and is required for telomere capping. In Drosophila sechellia (Fruit fly), this protein is Telomere-binding protein cav.